The sequence spans 822 residues: MGNMRRLLIFAVLVILTVISNSKSSYKYDGSLFSSKELDYDETDTKAMGSVFSRYMSDSDAQLILDLDFFRHFFNYAEAYRDGAEEGNLELMKYAVEMVEKLKSFDISMACVGDMMHLAWTGVEYATHVEEHKNCSDCKCTPLFQQKKSERHWIFNVFDAMGKVPAGIMSGNNLWVGSWSTCRKIDVVKNAQGQKWKGQYCLATIDAYERDNPLVYFGNMMSGPPDKHCYDKTVKNVTDDGFCFALFPVLKFGVCMPNTCTNHDVKQMLSFAIRATEGAVGTKSVCNVDVECRAESYSDAMSENGLAMFALYLLIATVVLVTFGTLYDLFIVSKAPQDEKNSSAFNHPFIKFILAFSMYTNGSEILQSKKNDREINSLHGVRFLSMCWIILGHTYYYIGTSLTTDNLVPTLINFPKQFHTQIIVQAPLAVDSFFFLSGMLAAFSFFKKTMKADPNHPPKLSAFNWQTWPMYYYKRYIRITPTYIIVMLFDVTLFTYISNGPFWRPIERQGCSIAWWTNLIYLNNFLLQDQECCMGWTWYLANDMQFHIFLMPLLVIVFLKWGMKVGLGLSTGLIALSSLIRLIITQIYGYPPAPILTAKLQIVYQLNDYWNDVYVRPYIRCTPFIVGIVVAYLLNAWTTREQKDLKIKLERRTVIICWCTSTVLGLYSVFGLYWFAKTGDISKPWEILYTIFGTPAYALALGWVVFACTTGNGGPVDTILSWRLFVPLSKITFCAYLLHPIMLQIYNLSRPQPFHFTTFIQMIRYTVEAVFASYTIAFFFSLAFEKPLNKIDEMLFNSKKMMNGENGNTTEMVPLNKIRNSD.

Residues 1–24 (MGNMRRLLIFAVLVILTVISNSKS) form the signal peptide. Asn-236 is a glycosylation site (N-linked (GlcNAc...) asparagine). The next 3 membrane-spanning stretches (helical) occupy residues 306 to 326 (LAMF…FGTL), 617 to 637 (PYIR…LNAW), and 655 to 675 (IICW…LYWF).

The protein belongs to the acyltransferase 3 family. In L1 larvae through to adult, hyp3 and hyp5, the most anterior cells in the hypodermis, and in intestine. Other hypodermal cells show weaker expression.

It localises to the membrane. Plays a role in the uptake of a range of molecules including lipids and xenobiotic compounds from the intestine to surrounding tissues. Mediates transport of lipids from intestine to the reproductive tract. Required for efficient yolk transport into oocytes. Vital for embryonic development. The chain is Nose resistant to fluoxetine protein 6 (nrf-6) from Caenorhabditis elegans.